The following is a 118-amino-acid chain: Ribonuclease P protein component (118 aa).

It belongs to the RnpA family. Consists of a catalytic RNA component (M1 or rnpB) and a protein subunit.

The enzyme catalyses Endonucleolytic cleavage of RNA, removing 5'-extranucleotides from tRNA precursor.. In terms of biological role, RNaseP catalyzes the removal of the 5'-leader sequence from pre-tRNA to produce the mature 5'-terminus. It can also cleave other RNA substrates such as 4.5S RNA. The protein component plays an auxiliary but essential role in vivo by binding to the 5'-leader sequence and broadening the substrate specificity of the ribozyme. This Shewanella denitrificans (strain OS217 / ATCC BAA-1090 / DSM 15013) protein is Ribonuclease P protein component.